Here is a 423-residue protein sequence, read N- to C-terminus: Probable histone-binding protein rbbD (423 aa).

WD repeat units lie at residues 119-159, 172-212, 222-262, 266-306, 310-350, and 367-407; these read NHEG…LEPT, GHKK…KSDS, GHTS…KPIH, AHNS…NRLH, SHTD…EEQN, and GHTS…YNDR.

The protein belongs to the WD repeat RBAP46/RBAP48/MSI1 family. In terms of assembly, probably binds directly to helix 1 of the histone fold of histone H4, a region that is not accessible when H4 is in chromatin.

The protein resides in the nucleus. Core histone-binding subunit that may target chromatin assembly factors, chromatin remodeling factors and histone deacetylases to their histone substrates in a manner that is regulated by nucleosomal DNA. Component of several complexes which regulate chromatin metabolism. The sequence is that of Probable histone-binding protein rbbD (rbbD) from Dictyostelium discoideum (Social amoeba).